We begin with the raw amino-acid sequence, 423 residues long: Imidazolonepropionase (423 aa).

Positions 80 and 82 each coordinate Fe(3+). Zn(2+)-binding residues include histidine 80 and histidine 82. Arginine 89, tyrosine 152, and histidine 185 together coordinate 4-imidazolone-5-propanoate. Tyrosine 152 is an N-formimidoyl-L-glutamate binding site. Histidine 250 contributes to the Fe(3+) binding site. Histidine 250 contacts Zn(2+). Glutamine 253 lines the 4-imidazolone-5-propanoate pocket. Aspartate 325 provides a ligand contact to Fe(3+). Residue aspartate 325 coordinates Zn(2+). Asparagine 327 and glycine 329 together coordinate N-formimidoyl-L-glutamate. Threonine 330 contacts 4-imidazolone-5-propanoate.

It belongs to the metallo-dependent hydrolases superfamily. HutI family. Requires Zn(2+) as cofactor. It depends on Fe(3+) as a cofactor.

It is found in the cytoplasm. The catalysed reaction is 4-imidazolone-5-propanoate + H2O = N-formimidoyl-L-glutamate. It functions in the pathway amino-acid degradation; L-histidine degradation into L-glutamate; N-formimidoyl-L-glutamate from L-histidine: step 3/3. Catalyzes the hydrolytic cleavage of the carbon-nitrogen bond in imidazolone-5-propanoate to yield N-formimidoyl-L-glutamate. It is the third step in the universal histidine degradation pathway. The sequence is that of Imidazolonepropionase from Cupriavidus pinatubonensis (strain JMP 134 / LMG 1197) (Cupriavidus necator (strain JMP 134)).